The chain runs to 138 residues: Large ribosomal subunit protein uL16 (138 aa).

This sequence belongs to the universal ribosomal protein uL16 family. Part of the 50S ribosomal subunit.

In terms of biological role, binds 23S rRNA and is also seen to make contacts with the A and possibly P site tRNAs. This is Large ribosomal subunit protein uL16 from Ureaplasma parvum serovar 3 (strain ATCC 27815 / 27 / NCTC 11736).